The sequence spans 104 residues: Protein SMALL AUXIN UP-REGULATED RNA 9 (104 aa).

The protein belongs to the ARG7 family. Interacts with and inhibits PP2C-D subfamily of type 2C phosphatases such as PP2C67/PP2C-D1. As to expression, expressed in etiolated hypocotyls, petioles, leaves and flowers.

Its subcellular location is the cell membrane. In terms of biological role, provide a mechanistic link between auxin and plasma membrane H(+)-ATPases (PM H(+)-ATPases, e.g. AHA1 and AHA2), and triggers PM H(+)-ATPases activity by promoting phosphorylation of their C-terminal autoinhibitory domain as a result of PP2C-D subfamily of type 2C phosphatases inhibition, thus leading to the acidification of the apoplast and the facilitation of solutes and water uptake to drive cell expansion. Triggers plant growth probably by promoting cell elongation. Regulates branch angles and bending. Probably involved in light intensity mediated root development. This chain is Protein SMALL AUXIN UP-REGULATED RNA 9, found in Arabidopsis thaliana (Mouse-ear cress).